The primary structure comprises 473 residues: Aspartyl/glutamyl-tRNA(Asn/Gln) amidotransferase subunit B (473 aa).

It belongs to the GatB/GatE family. GatB subfamily. Heterotrimer of A, B and C subunits.

The enzyme catalyses L-glutamyl-tRNA(Gln) + L-glutamine + ATP + H2O = L-glutaminyl-tRNA(Gln) + L-glutamate + ADP + phosphate + H(+). The catalysed reaction is L-aspartyl-tRNA(Asn) + L-glutamine + ATP + H2O = L-asparaginyl-tRNA(Asn) + L-glutamate + ADP + phosphate + 2 H(+). Its function is as follows. Allows the formation of correctly charged Asn-tRNA(Asn) or Gln-tRNA(Gln) through the transamidation of misacylated Asp-tRNA(Asn) or Glu-tRNA(Gln) in organisms which lack either or both of asparaginyl-tRNA or glutaminyl-tRNA synthetases. The reaction takes place in the presence of glutamine and ATP through an activated phospho-Asp-tRNA(Asn) or phospho-Glu-tRNA(Gln). The polypeptide is Aspartyl/glutamyl-tRNA(Asn/Gln) amidotransferase subunit B (Mycoplasmopsis synoviae (strain 53) (Mycoplasma synoviae)).